The sequence spans 539 residues: MSSELQTEIQEAVEKRRNFAIISHPDAGKTTLTEKLLLYGGAIHQAGAVKARRDQRKATSDWMEMEKQRGISITSTVLQFEYRNFQINLLDTPGHQDFSEDTYRTLAAADNAVMLIDAAKGLEPQTRKLFEVCRLRGLPIFTFINKLDRPTREPLELLDEIEQELGLKTYAVNWPIGTGDRFKGVFDRRHQGIHLFERRAHGSQQAQETAIKLGDPKIEAHLEQELYYQLKEELEILQELGGDLDLKELHDGQITPVFFGSAMTNFGVQLFLEAFLEYALQPEGRNSSVGVVDPTHPEFSGFVFKLQANMDPKHRDRVAFVRVCTGKFEKDMTVSHARTGKTVRLSRPQKLFAQDRESIEEAYGGDVIGLNNPGVFAIGDTIYSGTKLEYEGIPCFSPEIFAYLKNPNPSKFKQFQKGIQELREEGAIQIMYSTDDFKRDPILAAVGQLQFEVVQFRMLSEYGVETNLEPLPYSVARWVTGGWTALEKAGRIFNSMTVKDNWDRPVLLFKNEWNLNQVKADKPELGLSSTAPVGSGINE.

The tr-type G domain maps to 14–283; it reads EKRRNFAIIS…AFLEYALQPE (270 aa). GTP is bound by residues 23–30, 91–95, and 145–148; these read SHPDAGKT, DTPGH, and NKLD.

The protein belongs to the TRAFAC class translation factor GTPase superfamily. Classic translation factor GTPase family. PrfC subfamily.

It is found in the cytoplasm. Its function is as follows. Increases the formation of ribosomal termination complexes and stimulates activities of RF-1 and RF-2. It binds guanine nucleotides and has strong preference for UGA stop codons. It may interact directly with the ribosome. The stimulation of RF-1 and RF-2 is significantly reduced by GTP and GDP, but not by GMP. This Rippkaea orientalis (strain PCC 8801 / RF-1) (Cyanothece sp. (strain PCC 8801)) protein is Peptide chain release factor 3.